A 406-amino-acid chain; its full sequence is (R)-benzylsuccinyl-CoA dehydrogenase (406 aa).

The protein belongs to the acyl-CoA dehydrogenase family. As to quaternary structure, homotetramer. FAD serves as cofactor.

It carries out the reaction (R)-2-benzylsuccinyl-CoA + oxidized [electron-transfer flavoprotein] + H(+) = (E)-2-benzylidenesuccinyl-CoA + reduced [electron-transfer flavoprotein]. Its pathway is xenobiotic degradation; toluene degradation. Its activity is regulated as follows. Inhibited by (S)-benzylsuccinyl-CoA. Its function is as follows. Catalyzes the oxidation of benzylsuccinyl-CoA to benzylidenesuccinyl-CoA. In Thauera aromatica, this protein is (R)-benzylsuccinyl-CoA dehydrogenase (bbsG).